Reading from the N-terminus, the 345-residue chain is Biotin synthase (345 aa).

The region spanning 49–276 (NQVQMSTLLS…ASFVRLSAGR (228 aa)) is the Radical SAM core domain. [4Fe-4S] cluster contacts are provided by Cys-64, Cys-68, and Cys-71. Residues Cys-108, Cys-139, Cys-199, and Arg-271 each coordinate [2Fe-2S] cluster.

Belongs to the radical SAM superfamily. Biotin synthase family. As to quaternary structure, homodimer. [4Fe-4S] cluster is required as a cofactor. Requires [2Fe-2S] cluster as cofactor.

The enzyme catalyses (4R,5S)-dethiobiotin + (sulfur carrier)-SH + 2 reduced [2Fe-2S]-[ferredoxin] + 2 S-adenosyl-L-methionine = (sulfur carrier)-H + biotin + 2 5'-deoxyadenosine + 2 L-methionine + 2 oxidized [2Fe-2S]-[ferredoxin]. Its pathway is cofactor biosynthesis; biotin biosynthesis; biotin from 7,8-diaminononanoate: step 2/2. Its function is as follows. Catalyzes the conversion of dethiobiotin (DTB) to biotin by the insertion of a sulfur atom into dethiobiotin via a radical-based mechanism. In Nitrosococcus oceani (strain ATCC 19707 / BCRC 17464 / JCM 30415 / NCIMB 11848 / C-107), this protein is Biotin synthase.